We begin with the raw amino-acid sequence, 423 residues long: Adenylosuccinate synthetase (423 aa).

Residues 12-18 (GDEGKGK) and 40-42 (GHT) each bind GTP. Asp13 serves as the catalytic Proton acceptor. Asp13 and Gly40 together coordinate Mg(2+). IMP contacts are provided by residues 13–16 (DEGK), 38–41 (NAGH), Thr128, Arg142, Gln223, Thr238, and Arg302. His41 functions as the Proton donor in the catalytic mechanism. A substrate-binding site is contributed by 298-304 (TTTGRPR). GTP is bound by residues Arg304, 330–332 (RLD), and 412–414 (CIG).

The protein belongs to the adenylosuccinate synthetase family. Homodimer. It depends on Mg(2+) as a cofactor.

The protein localises to the cytoplasm. It carries out the reaction IMP + L-aspartate + GTP = N(6)-(1,2-dicarboxyethyl)-AMP + GDP + phosphate + 2 H(+). The protein operates within purine metabolism; AMP biosynthesis via de novo pathway; AMP from IMP: step 1/2. Plays an important role in the de novo pathway of purine nucleotide biosynthesis. Catalyzes the first committed step in the biosynthesis of AMP from IMP. The chain is Adenylosuccinate synthetase from Dehalococcoides mccartyi (strain ATCC BAA-2100 / JCM 16839 / KCTC 5957 / BAV1).